A 98-amino-acid chain; its full sequence is Citrate lyase acyl carrier protein (98 aa).

Ser14 carries the O-(phosphoribosyl dephospho-coenzyme A)serine modification.

This sequence belongs to the CitD family. In terms of assembly, oligomer with a subunit composition of (alpha,beta,gamma)6.

The protein resides in the cytoplasm. Covalent carrier of the coenzyme of citrate lyase. The polypeptide is Citrate lyase acyl carrier protein (Salmonella arizonae (strain ATCC BAA-731 / CDC346-86 / RSK2980)).